The primary structure comprises 300 residues: MNAKHRVTSHCDHELGICGISPEANEALPAKKPLEIYTFIDPLCAQCWSMEPILKKLKVEYGHYFRIRVLLAGKLNVWNACEAGKAKYTRPPVWVKGVSSSNMPYAGDIKLSDFHPYKASLAIKAAELQGPKAGHRFLRKLRETLFLQKQNITNEDVLKACANAAGLDVDAFIADLHSPSAAKALQCDVQTTNEMDVDTVPTFVFFNDNSEEAGIKISGQYPFSIYVQLLEDMLGFVPVKATPPTLEGLLQTYGFLATAEVAMVLDLSSEEAEKKLKTLMLQQKVEAVPYEYGTFWKWLM.

This sequence belongs to the SpxH family. In terms of assembly, interacts with Spx.

It is found in the cytoplasm. In terms of biological role, adapter protein required for efficient degradation of Spx by ClpXP under non-stress conditions. Interaction with Spx stabilizes Spx and exposes the C-terminus of Spx for recognition and proteolysis by ClpXP. The protein is ClpXP adapter protein SpxH of Shouchella clausii (strain KSM-K16) (Alkalihalobacillus clausii).